A 657-amino-acid polypeptide reads, in one-letter code: MYRSSFLREVRKEKYERSDAYDELRGSPEFDSLAQAQGLENLQELNERFASYINRARVLEQRNTILRKQLETFQRMDELVGLDEAFAGQIEFNRQRMRELASDRAKLEREEKDAQRMLDEYHNKYRNEREYQQKLKETLERLNKEADEALLCNLELQIESQFLQDDINATKDRYKKNLMEIQTYVNILQQIIQTTPRVSPITTGISEEKLVAERRIPVLQSQLEEYKSILCQLQAQKYKLQTETTMLEQAIKNTQESYDDEIQLYNEQIENLRKGIEEAERTLEKYTTDCRQLVIYQQSLENELERYKRIIENEDSRLNSAIAGTPVTLFTQIYRPVQPQASRGRDITQAMQEIASVKPRQKALTKKLSRKKEIMSKDITDGLSPEKLYERTVEVFDQDQLEFRHEGSVTCEPGQEELELVEKEAVPEDVPDGAQISKAFDKLCNLVKEKIRVYKRPEAKVDSHPKGRYVLVTGEEGYEEPCFSSIPAGGGITVSTSNGKVTIGGDVEPIPELPEPSEPSEKEKRDICERRDEFETQDKLKEEEKEDLFEWGKIRGKIEQVTKYPDVSEPEAVPSPGLISPAEPGVLQETDHDREDKQGLLFREAGLPGSVSYEKVEVVESIEKFSDDRIQTYEETAMIVETMIEKTSKKKPGDKGS.

The segment at 1-38 (MYRSSFLREVRKEKYERSDAYDELRGSPEFDSLAQAQG) is head. The region spanning 38 to 318 (GLENLQELNE…RIIENEDSRL (281 aa)) is the IF rod domain. A coil 1A region spans residues 39–73 (LENLQELNERFASYINRARVLEQRNTILRKQLETF). Residues 74–82 (QRMDELVGL) form a linker 1 region. The tract at residues 83-182 (DEAFAGQIEF…RYKKNLMEIQ (100 aa)) is coil 1B. The tract at residues 183–199 (TYVNILQQIIQTTPRVS) is linker 12. Residues 200-318 (PITTGISEEK…RIIENEDSRL (119 aa)) are coil 2. The tract at residues 319–657 (NSAIAGTPVT…SKKKPGDKGS (339 aa)) is tail. Disordered stretches follow at residues 503–530 (IGGD…ICER) and 565–593 (PDVS…TDHD). Positions 519–530 (PSEKEKRDICER) are enriched in basic and acidic residues.

Belongs to the intermediate filament family. In terms of tissue distribution, detected in eye lens fiber cells (at protein level). Detected in embryonic eye lens.

The protein resides in the cell membrane. The protein localises to the cytoplasm. It is found in the cytoskeleton. Its subcellular location is the cell cortex. In terms of biological role, required for the correct formation of lens intermediate filaments. This chain is Filensin (BFSP1), found in Gallus gallus (Chicken).